The chain runs to 146 residues: 2S sulfur-rich seed storage protein 1 (146 aa).

A signal peptide spans 1–22; it reads MAKISVAAAALLVLMALGHATA. A propeptide spanning residues 23–36 is cleaved from the precursor; that stretch reads FRATVTTTVVEEEN. Glutamine 37 carries the pyrrolidone carboxylic acid modification. Disulfide bonds link cysteine 40-cysteine 92, cysteine 53-cysteine 81, cysteine 82-cysteine 130, and cysteine 94-cysteine 137. Positions 65-69 are excised as a propeptide; the sequence is PYQTM. A propeptide spanning residues 143 to 146 is cleaved from the precursor; it reads IAGF.

It belongs to the 2S seed storage albumins family. In terms of assembly, the mature protein consists of a small and a large chain linked by disulfide bonds.

This is a 2S seed storage protein. The polypeptide is 2S sulfur-rich seed storage protein 1 (BE2S1) (Bertholletia excelsa (Brazil nut)).